The sequence spans 399 residues: Enoyl-[acyl-carrier-protein] reductase [NADH] (399 aa).

NAD(+)-binding positions include 48 to 53, 74 to 75, 111 to 112, and 139 to 140; these read GASTGY, FE, DA, and LA. Position 225 (Tyr225) interacts with substrate. Residue Tyr235 is the Proton donor of the active site. Residues Lys244 and 273–275 contribute to the NAD(+) site; that span reads VVT.

The protein belongs to the TER reductase family. In terms of assembly, monomer.

It catalyses the reaction a 2,3-saturated acyl-[ACP] + NAD(+) = a (2E)-enoyl-[ACP] + NADH + H(+). It functions in the pathway lipid metabolism; fatty acid biosynthesis. Its function is as follows. Involved in the final reduction of the elongation cycle of fatty acid synthesis (FAS II). Catalyzes the reduction of a carbon-carbon double bond in an enoyl moiety that is covalently linked to an acyl carrier protein (ACP). The chain is Enoyl-[acyl-carrier-protein] reductase [NADH] from Serratia proteamaculans (strain 568).